We begin with the raw amino-acid sequence, 667 residues long: UvrABC system protein B (667 aa).

The Helicase ATP-binding domain occupies 25–414 (TGLQRGDKHQ…GVVVEQIIRP (390 aa)). 38–45 (GVTGSGKT) contacts ATP. A Beta-hairpin motif is present at residues 91–114 (YYDYYQPEAYVPTTDTFIEKDSSI). The 167-residue stretch at 430-596 (QVDDLIHEIR…TVKKSLRSIL (167 aa)) folds into the Helicase C-terminal domain. Residues 624-659 (KNEIARVKEEMLAAAANLEFEKAAELRDRMLELDKL) enclose the UVR domain.

It belongs to the UvrB family. Forms a heterotetramer with UvrA during the search for lesions. Interacts with UvrC in an incision complex.

It is found in the cytoplasm. The UvrABC repair system catalyzes the recognition and processing of DNA lesions. A damage recognition complex composed of 2 UvrA and 2 UvrB subunits scans DNA for abnormalities. Upon binding of the UvrA(2)B(2) complex to a putative damaged site, the DNA wraps around one UvrB monomer. DNA wrap is dependent on ATP binding by UvrB and probably causes local melting of the DNA helix, facilitating insertion of UvrB beta-hairpin between the DNA strands. Then UvrB probes one DNA strand for the presence of a lesion. If a lesion is found the UvrA subunits dissociate and the UvrB-DNA preincision complex is formed. This complex is subsequently bound by UvrC and the second UvrB is released. If no lesion is found, the DNA wraps around the other UvrB subunit that will check the other stand for damage. This Syntrophotalea carbinolica (strain DSM 2380 / NBRC 103641 / GraBd1) (Pelobacter carbinolicus) protein is UvrABC system protein B.